The chain runs to 200 residues: Dipicolinate synthase subunit B (200 aa).

In terms of assembly, dipicolinate synthase likely consists of DpaA and DpaB, since both proteins are required for DPA synthesis.

The enzyme catalyses (S)-2,3-dihydrodipicolinate + NADP(+) = dipicolinate + NADPH + H(+). In terms of biological role, together with DpaA, catalyzes the conversion of dihydrodipicolinate to dipicolinate (DPA), which constitutes up to 10% of the dry weight of the spore. This Bacillus subtilis (strain 168) protein is Dipicolinate synthase subunit B (dpaB).